The chain runs to 355 residues: Blue-sensitive opsin (355 aa).

Residues 1–41 (MKSRPQEFQEDFYIPIPLDTNNITALSPFLVPQDHLGGSGI) are Extracellular-facing. Residue N22 is glycosylated (N-linked (GlcNAc...) asparagine). A helical transmembrane segment spans residues 42–66 (FMIMTVFMLFLFIGGTSINVLTIVC). Over 67 to 78 (TVQYKKLRSHLN) the chain is Cytoplasmic. A helical transmembrane segment spans residues 79–104 (YILVNLAISNLLVSTVGSFTAFVSFL). Residues 105–118 (NRYFIFGPTACKIE) are Extracellular-facing. C115 and C192 are disulfide-bonded. A helical transmembrane segment spans residues 119-138 (GFVATLGGMVSLWSLSVVAF). Over 139-157 (ERWLVICKPVGNFSFKGTH) the chain is Cytoplasmic. The chain crosses the membrane as a helical span at residues 158–181 (AIIGCALTWFFALLASTPPLFGWS). Residues 182-207 (RYIPEGLQCSCGPDWYTTENKYNNES) are Extracellular-facing. Residue N205 is glycosylated (N-linked (GlcNAc...) asparagine). Residues 208–235 (YVMFLFCFCFGFPFTVILFCYGQLLFTL) traverse the membrane as a helical segment. The Cytoplasmic portion of the chain corresponds to 236 to 257 (KSAAKAQADSASTQKAEREVTK). Residues 258 to 281 (MVVVMVMGFLVCWLPYASFALWVV) traverse the membrane as a helical segment. At 282-289 (FNRGQSFD) the chain is on the extracellular side. The chain crosses the membrane as a helical span at residues 290-314 (LRLGTIPSCFSKASTVYNPVIYVFM). N6-(retinylidene)lysine is present on K301. At 315-355 (NKQFRSCMMKLIFCGKSPFGDDEEASSSSQVTQVSSVGPEK) the chain is on the cytoplasmic side. The tract at residues 334 to 355 (GDDEEASSSSQVTQVSSVGPEK) is disordered. A compositionally biased stretch (low complexity) spans 340–355 (SSSSQVTQVSSVGPEK).

It belongs to the G-protein coupled receptor 1 family. Opsin subfamily. In terms of processing, phosphorylated on some or all of the serine and threonine residues present in the C-terminal region. The color pigments are found in the cone photoreceptor cells.

The protein localises to the membrane. In terms of biological role, visual pigments are the light-absorbing molecules that mediate vision. They consist of an apoprotein, opsin, covalently linked to cis-retinal. The chain is Blue-sensitive opsin (B23) from Psalidodon fasciatus (Banded astyanax).